The chain runs to 519 residues: Putative cytochrome P450 CYP13A1 (519 aa).

Cys465 provides a ligand contact to heme.

It belongs to the cytochrome P450 family. Heme serves as cofactor.

Functionally, cytochromes P450 are a group of heme-thiolate monooxygenases. They oxidize a variety of structurally unrelated compounds, including steroids, fatty acids, and xenobiotics. The chain is Putative cytochrome P450 CYP13A1 (cyp-13A1) from Caenorhabditis elegans.